We begin with the raw amino-acid sequence, 637 residues long: MIYHFTEEYDIIVIGAGHAGVEASLAASRMGCKVLLATINIEMLAFMPCNPSIGGSAKGIVVREVDALGGEMAKTIDKTYIQMKMLNTGKGPAVRALRAQADKELYSKEMRKTVENQENLTLRQTMIDEILVEDGKVVGVRTATHQEYAAKAVIVTTGTALRGEIIIGDLKYSSGPNHSLASINLADNLKELGLEIGRFKTGTPPRVKASSINYDVTEIQPGDEAPNHFSYTSRDEDYVKDQVPCWLTYTNGTSHEIIQNNLHRAPMFTGVVKGVGPRYCPSIEDKIVRFADKERHQLFLEPEGRNTEEVYVQGLSTSLPEDVQRDLVHSIKGLENAEMMRTGYAIEYDMVLPHQLRATLETKKISGLFTAGQTNGTSGYEEAAGQGIIAGINAALKIQGKPELILKRSDGYIGVMIDDLVTKGTIEPYRLLTSRAEYRLILRHDNADMRLTEMGREIGLVDDERWTRFEIKKNQFDNEMKRLDSIKLKPVKETNAKVEEMGFKPLTDAVTAKEFLRRPEVSYQDVVAFIGPAAEDLDDKIIELIETEIKYEGYISKAMDQVAKMKRMEEKRIPANIDWDDIDSIATEARQKFKLINPETIGQASRISGVNPADISILMVYLEGKNRSISKTLQKSK.

FAD-binding positions include 15 to 20 (GAGHAG), Ile-127, and Ser-182. 276-290 (GPRYCPSIEDKIVRF) contacts NAD(+). An FAD-binding site is contributed by Gln-373.

Belongs to the MnmG family. In terms of assembly, homodimer. Heterotetramer of two MnmE and two MnmG subunits. The cofactor is FAD.

It is found in the cytoplasm. In terms of biological role, NAD-binding protein involved in the addition of a carboxymethylaminomethyl (cmnm) group at the wobble position (U34) of certain tRNAs, forming tRNA-cmnm(5)s(2)U34. In Streptococcus pneumoniae (strain Hungary19A-6), this protein is tRNA uridine 5-carboxymethylaminomethyl modification enzyme MnmG.